We begin with the raw amino-acid sequence, 455 residues long: tRNA modification GTPase MnmE (455 aa).

Residues R23, E85, and R124 each coordinate (6S)-5-formyl-5,6,7,8-tetrahydrofolate. Residues 220–375 enclose the TrmE-type G domain; sequence GVSVVIAGKP…LQDAIFEAFI (156 aa). K(+) is bound at residue N230. Residues 230–235, 249–255, and 274–277 each bind GTP; these read NVGKSS, TSVPGTT, and DTAG. Mg(2+) is bound at residue S234. Positions 249, 251, and 254 each coordinate K(+). T255 provides a ligand contact to Mg(2+). K455 contributes to the (6S)-5-formyl-5,6,7,8-tetrahydrofolate binding site.

This sequence belongs to the TRAFAC class TrmE-Era-EngA-EngB-Septin-like GTPase superfamily. TrmE GTPase family. In terms of assembly, homodimer. Heterotetramer of two MnmE and two MnmG subunits. It depends on K(+) as a cofactor.

It is found in the cytoplasm. Exhibits a very high intrinsic GTPase hydrolysis rate. Involved in the addition of a carboxymethylaminomethyl (cmnm) group at the wobble position (U34) of certain tRNAs, forming tRNA-cmnm(5)s(2)U34. This chain is tRNA modification GTPase MnmE, found in Geotalea uraniireducens (strain Rf4) (Geobacter uraniireducens).